The chain runs to 82 residues: Small ribosomal subunit protein uS17 (82 aa).

Belongs to the universal ribosomal protein uS17 family. As to quaternary structure, part of the 30S ribosomal subunit.

One of the primary rRNA binding proteins, it binds specifically to the 5'-end of 16S ribosomal RNA. The polypeptide is Small ribosomal subunit protein uS17 (Sulfurimonas denitrificans (strain ATCC 33889 / DSM 1251) (Thiomicrospira denitrificans (strain ATCC 33889 / DSM 1251))).